Reading from the N-terminus, the 958-residue chain is Glycine dehydrogenase (decarboxylating) (958 aa).

At lysine 705 the chain carries N6-(pyridoxal phosphate)lysine.

Belongs to the GcvP family. As to quaternary structure, the glycine cleavage system is composed of four proteins: P, T, L and H. It depends on pyridoxal 5'-phosphate as a cofactor.

The enzyme catalyses N(6)-[(R)-lipoyl]-L-lysyl-[glycine-cleavage complex H protein] + glycine + H(+) = N(6)-[(R)-S(8)-aminomethyldihydrolipoyl]-L-lysyl-[glycine-cleavage complex H protein] + CO2. In terms of biological role, the glycine cleavage system catalyzes the degradation of glycine. The P protein binds the alpha-amino group of glycine through its pyridoxal phosphate cofactor; CO(2) is released and the remaining methylamine moiety is then transferred to the lipoamide cofactor of the H protein. This Synechococcus sp. (strain CC9902) protein is Glycine dehydrogenase (decarboxylating).